Here is a 337-residue protein sequence, read N- to C-terminus: Heme A synthase (337 aa).

Helical transmembrane passes span Ile-6–Ile-26, Phe-87–Phe-107, Leu-119–Val-139, Leu-154–Lys-174, and Leu-192–Val-212. His-256 serves as a coordination point for heme. 3 helical membrane-spanning segments follow: residues Leu-258–Glu-278, Ile-285–Leu-305, and Val-308–Ile-328. Residue His-316 participates in heme binding.

The protein belongs to the COX15/CtaA family. Type 2 subfamily. As to quaternary structure, interacts with CtaB. Heme b serves as cofactor.

The protein resides in the cell membrane. The catalysed reaction is Fe(II)-heme o + 2 A + H2O = Fe(II)-heme a + 2 AH2. It functions in the pathway porphyrin-containing compound metabolism; heme A biosynthesis; heme A from heme O: step 1/1. Catalyzes the conversion of heme O to heme A by two successive hydroxylations of the methyl group at C8. The first hydroxylation forms heme I, the second hydroxylation results in an unstable dihydroxymethyl group, which spontaneously dehydrates, resulting in the formyl group of heme A. The protein is Heme A synthase of Rickettsia massiliae (strain Mtu5).